A 598-amino-acid chain; its full sequence is Peroxisomal targeting signal receptor (598 aa).

Disordered stretches follow at residues 1–54 (MSFM…GEMS), 135–154 (RGGSPAEAMQQQGPGPMQGG), and 208–237 (AVGKGKEVEEQTAETATATETVTETETTTE). The segment covering 9-22 (ECSTGRNPLSQFTK) has biased composition (polar residues). Cys-10 is covalently cross-linked (Glycyl cysteine thioester (Cys-Gly) (interchain with G-Cter in ubiquitin)). Lys-22 is covalently cross-linked (Glycyl lysine isopeptide (Lys-Gly) (interchain with G-Cter in ubiquitin)). Residues 23-35 (HTAEDRSLQHDRV) show a composition bias toward basic and acidic residues. Residues 220–233 (AETATATETVTETE) show a composition bias toward low complexity. 7 TPR repeats span residues 304–337 (PDPFKIGVELMETGGRLSEAALAFEAAVQKNTEH), 338–371 (AEAWGRLGACQAQNEKEDPAIRALERCIKLEPGN), 372–409 (LSALMNLSVSYTNEGYENAAYATLERWLATKYPEVVDQ), 410–447 (ARNQEPRLGNEDKFQLHSRVTELFIRAAQLSPDGANID), 448–481 (ADVQVGLGVLFYGNEEYDKAIDCFNAAIAVRPDD), 482–515 (ALLWNRLGATLANSHRSEEAIDAYYKALELRPSF), and 516–549 (VRARYNLGVSCINIGCYKEAAQYLLGALSMHKVE).

The protein belongs to the peroxisomal targeting signal receptor family. Post-translationally, ubiquitination at Cys-10 is UBC4-independent but requires the presence of PEX4. Ubiquitination at Lys-22 is UBC4-dependent.

It localises to the cytoplasm. It is found in the peroxisome membrane. Binds to the C-terminal PTS1-type tripeptide peroxisomal targeting signal (SKL-type) and plays an essential role in peroxisomal protein import. The chain is Peroxisomal targeting signal receptor (PAY32) from Yarrowia lipolytica (strain CLIB 122 / E 150) (Yeast).